The chain runs to 832 residues: Conserved oligomeric Golgi complex subunit 5 (832 aa).

2 stretches are compositionally biased toward pro residues: residues 1-11 (MALPPSSPSPS) and 23-38 (NPPPSSLSSGAPPPQT). Residues 1–49 (MALPPSSPSPSSPSLQRLSTFKNPPPSSLSSGAPPPQTPSSSSSSPLDS) form a disordered region. Positions 39–49 (PSSSSSSPLDS) are enriched in low complexity.

It belongs to the COG5 family. In terms of assembly, homodimer. Component of the conserved oligomeric Golgi complex which is composed of eight different subunits and is required for normal Golgi morphology and localization. Interacts with COG3, COG6, COG7 and COG8.

The protein localises to the golgi apparatus membrane. In terms of biological role, required for normal Golgi function. The chain is Conserved oligomeric Golgi complex subunit 5 from Arabidopsis thaliana (Mouse-ear cress).